Reading from the N-terminus, the 90-residue chain is UPF0329 protein ECU04_1650 (90 aa).

This sequence belongs to the UPF0329 family.

This is UPF0329 protein ECU04_1650 from Encephalitozoon cuniculi (strain GB-M1) (Microsporidian parasite).